Here is a 154-residue protein sequence, read N- to C-terminus: Myoglobin (154 aa).

The 147-residue stretch at 2–148 (GLSDGEWQQV…FRNDIAAKYK (147 aa)) folds into the Globin domain. Residue Ser4 is modified to Phosphoserine. His65 contributes to the nitrite binding site. An O2-binding site is contributed by His65. Heme b is bound at residue His94.

It belongs to the globin family. Monomeric.

It localises to the cytoplasm. The protein resides in the sarcoplasm. The enzyme catalyses Fe(III)-heme b-[protein] + nitric oxide + H2O = Fe(II)-heme b-[protein] + nitrite + 2 H(+). It catalyses the reaction H2O2 + AH2 = A + 2 H2O. Its function is as follows. Monomeric heme protein which primary function is to store oxygen and facilitate its diffusion within muscle tissues. Reversibly binds oxygen through a pentacoordinated heme iron and enables its timely and efficient release as needed during periods of heightened demand. Depending on the oxidative conditions of tissues and cells, and in addition to its ability to bind oxygen, it also has a nitrite reductase activity whereby it regulates the production of bioactive nitric oxide. Under stress conditions, like hypoxia and anoxia, it also protects cells against reactive oxygen species thanks to its pseudoperoxidase activity. The chain is Myoglobin (MB) from Equus quagga burchellii (Burchell's zebra).